We begin with the raw amino-acid sequence, 321 residues long: uncharacterized protein (321 aa).

A compositionally biased stretch (basic residues) spans 1-12 (MSMFLKKQKKTK). Disordered regions lie at residues 1–59 (MSMF…MRKT) and 71–289 (EDCT…GPED). Over residues 50–59 (DGIKETMRKT) the composition is skewed to basic and acidic residues. Acidic residues predominate over residues 99 to 115 (DDSDSESSEDGGEDDEE). A compositionally biased stretch (low complexity) spans 156-175 (SDSSSSSSSSSDSESSSSSD). Over residues 179-189 (DGDRSTPEPDI) the composition is skewed to basic and acidic residues. Residues 231–242 (EPSPLRAAAAAA) show a composition bias toward low complexity.

This is an uncharacterized protein from Equus caballus (Horse).